Here is a 380-residue protein sequence, read N- to C-terminus: Cytochrome b (380 aa).

Helical transmembrane passes span 33-53, 77-98, 113-133, and 178-198; these read FGSL…FLAM, WLIR…YLHI, WNVG…GYVL, and FFAF…LHLL. Heme b is bound by residues His-83 and His-97. Residues His-182 and His-196 each contribute to the heme b site. His-201 serves as a coordination point for a ubiquinone. A run of 4 helical transmembrane segments spans residues 226-246, 288-308, 320-340, and 347-367; these read YKDL…ALFS, LGGV…PILH, FSQI…WIGG, and YIII…VFFP.

It belongs to the cytochrome b family. The cytochrome bc1 complex contains 3 respiratory subunits (MT-CYB, CYC1 and UQCRFS1), 2 core proteins (UQCRC1 and UQCRC2) and probably 6 low-molecular weight proteins. It depends on heme b as a cofactor.

The protein localises to the mitochondrion inner membrane. In terms of biological role, component of the ubiquinol-cytochrome c reductase complex (complex III or cytochrome b-c1 complex) that is part of the mitochondrial respiratory chain. The b-c1 complex mediates electron transfer from ubiquinol to cytochrome c. Contributes to the generation of a proton gradient across the mitochondrial membrane that is then used for ATP synthesis. The protein is Cytochrome b (mt-cyb) of Apogon semilineatus (Half-lined cardinal).